Consider the following 406-residue polypeptide: Putative odorant receptor 65b (406 aa).

Topologically, residues 1 to 55 (MDIQRFLKFYKVGWKTYRDPLMEASHSSIYYWREQMKAMALFTTTEERLLPYRSK) are cytoplasmic. Residues 56–76 (WHTLVYIQMVIFFASMSFGLT) traverse the membrane as a helical segment. Residues 77 to 88 (ESMGDHVQMGRD) lie on the Extracellular side of the membrane. The helical transmembrane segment at 89-109 (LAFILGAFFIIFKTYYFCWYG) threads the bilayer. Residues 110-144 (DELDQVISDLDALHPWAQKGPNPVEYQTGKRWYFV) are Cytoplasmic-facing. The helical transmembrane segment at 145–165 (MAFFLATSWSFFLCILLLLLI) threads the bilayer. The Extracellular segment spans residues 166–218 (TSPMWVHQQNLPFHAAFPFQWHEKSLHPISHAIIYLFQSYFAVYCLTWLLCIE). The helical transmembrane segment at 219–239 (GLSICIYAEITFGIEVLCLEL) threads the bilayer. Topologically, residues 240-275 (RQIHRHNYGLQELRMETNRLVKLHQKIVEILDRTND) are cytoplasmic. A helical transmembrane segment spans residues 276-296 (VFHGTLIMQMGVNFSLVSLSV). At 297 to 307 (LEAVEARKDPK) the chain is on the extracellular side. A helical membrane pass occupies residues 308–328 (VVAQFAVLMLLALGHLSMWSY). Residues 329–381 (CGDQLSQKSLQISEAAYEAYDPTKGSKDVYRDLCVIIRRGQDPLIMRASPFPS) lie on the Cytoplasmic side of the membrane. Residues 382–402 (FNLINYSAILNQCYGILTFLL) form a helical membrane-spanning segment. Residues 403-406 (KTLD) are Extracellular-facing.

It belongs to the insect chemoreceptor superfamily. Heteromeric odorant receptor channel (TC 1.A.69) family. Or49a subfamily. Interacts with Orco. Complexes exist early in the endomembrane system in olfactory sensory neurons (OSNs), coupling these complexes to the conserved ciliary trafficking pathway.

It localises to the cell membrane. Odorant receptor which mediates acceptance or avoidance behavior, depending on its substrates. The odorant receptor repertoire encodes a large collection of odor stimuli that vary widely in identity, intensity, and duration. May form a complex with Orco to form odorant-sensing units, providing sensitive and prolonged odorant signaling and calcium permeability. In Drosophila melanogaster (Fruit fly), this protein is Putative odorant receptor 65b (Or65b).